Here is a 379-residue protein sequence, read N- to C-terminus: Homoserine O-acetyltransferase (379 aa).

An AB hydrolase-1 domain is found at 52-356 (NVVVVLHALT…VYGHDGFLVE (305 aa)). Ser-157 serves as the catalytic Nucleophile. Substrate is bound at residue Arg-227. Residues Asp-320 and His-350 contribute to the active site. A substrate-binding site is contributed by Asp-351.

It belongs to the AB hydrolase superfamily. MetX family. As to quaternary structure, homodimer.

The protein localises to the cytoplasm. The enzyme catalyses L-homoserine + acetyl-CoA = O-acetyl-L-homoserine + CoA. It functions in the pathway amino-acid biosynthesis; L-methionine biosynthesis via de novo pathway; O-acetyl-L-homoserine from L-homoserine: step 1/1. In terms of biological role, transfers an acetyl group from acetyl-CoA to L-homoserine, forming acetyl-L-homoserine. This is Homoserine O-acetyltransferase from Mycobacterium tuberculosis (strain CDC 1551 / Oshkosh).